Reading from the N-terminus, the 156-residue chain is Small ribosomal subunit protein uS7 (156 aa).

It belongs to the universal ribosomal protein uS7 family. As to quaternary structure, part of the 30S ribosomal subunit. Contacts proteins S9 and S11.

One of the primary rRNA binding proteins, it binds directly to 16S rRNA where it nucleates assembly of the head domain of the 30S subunit. Is located at the subunit interface close to the decoding center, probably blocks exit of the E-site tRNA. This is Small ribosomal subunit protein uS7 from Pelobacter propionicus (strain DSM 2379 / NBRC 103807 / OttBd1).